The following is a 442-amino-acid chain: UDP-glycosyltransferase 79B7 (442 aa).

Residues Ser260, 319–321 (VQQ), 336–344 (HCGPGTIWE), and 358–361 (LSDQ) each bind UDP-alpha-D-glucose.

Belongs to the UDP-glycosyltransferase family.

This chain is UDP-glycosyltransferase 79B7 (UGT79B7), found in Arabidopsis thaliana (Mouse-ear cress).